We begin with the raw amino-acid sequence, 300 residues long: tRNA pseudouridine synthase B (300 aa).

Residue Asp47 is the Nucleophile of the active site.

The protein belongs to the pseudouridine synthase TruB family. Type 1 subfamily.

The catalysed reaction is uridine(55) in tRNA = pseudouridine(55) in tRNA. In terms of biological role, responsible for synthesis of pseudouridine from uracil-55 in the psi GC loop of transfer RNAs. The chain is tRNA pseudouridine synthase B from Azoarcus sp. (strain BH72).